The following is a 123-amino-acid chain: Large ribosomal subunit protein bL12 (123 aa).

It belongs to the bacterial ribosomal protein bL12 family. As to quaternary structure, homodimer. Part of the ribosomal stalk of the 50S ribosomal subunit. Forms a multimeric L10(L12)X complex, where L10 forms an elongated spine to which 2 to 4 L12 dimers bind in a sequential fashion. Binds GTP-bound translation factors.

In terms of biological role, forms part of the ribosomal stalk which helps the ribosome interact with GTP-bound translation factors. Is thus essential for accurate translation. This chain is Large ribosomal subunit protein bL12, found in Chlorobium phaeovibrioides (strain DSM 265 / 1930) (Prosthecochloris vibrioformis (strain DSM 265)).